Consider the following 287-residue polypeptide: Pyridoxal kinase PdxY (287 aa).

Residues Ser9 and 44–45 (MQ) contribute to the substrate site. 4 residues coordinate ATP: Asp111, Ala142, Glu147, and Lys180. Asp221 contributes to the substrate binding site.

Belongs to the pyridoxine kinase family. PdxY subfamily. As to quaternary structure, homodimer. Requires Mg(2+) as cofactor.

The catalysed reaction is pyridoxal + ATP = pyridoxal 5'-phosphate + ADP + H(+). Its pathway is cofactor metabolism; pyridoxal 5'-phosphate salvage; pyridoxal 5'-phosphate from pyridoxal: step 1/1. Functionally, pyridoxal kinase involved in the salvage pathway of pyridoxal 5'-phosphate (PLP). Catalyzes the phosphorylation of pyridoxal to PLP. The polypeptide is Pyridoxal kinase PdxY (Burkholderia thailandensis (strain ATCC 700388 / DSM 13276 / CCUG 48851 / CIP 106301 / E264)).